We begin with the raw amino-acid sequence, 511 residues long: Apolipoprotein N-acyltransferase (511 aa).

The next 6 helical transmembrane spans lie at 24–44 (LALA…LLYL), 58–78 (GWWY…VSIH), 90–110 (FLML…AWLW), 125–145 (LAFA…LTGF), 163–183 (VPVG…ALLV), and 192–212 (GASL…GLYL). The CN hydrolase domain occupies 230–470 (IQGNIAQELK…QGILRGEVIP (241 aa)). Glu269 acts as the Proton acceptor in catalysis. Lys330 is an active-site residue. Cys382 acts as the Nucleophile in catalysis. A helical transmembrane segment spans residues 482 to 502 (VWPLAGLAGVLLLWALLGRQL).

The protein belongs to the CN hydrolase family. Apolipoprotein N-acyltransferase subfamily.

The protein localises to the cell inner membrane. The catalysed reaction is N-terminal S-1,2-diacyl-sn-glyceryl-L-cysteinyl-[lipoprotein] + a glycerophospholipid = N-acyl-S-1,2-diacyl-sn-glyceryl-L-cysteinyl-[lipoprotein] + a 2-acyl-sn-glycero-3-phospholipid + H(+). It participates in protein modification; lipoprotein biosynthesis (N-acyl transfer). Its function is as follows. Catalyzes the phospholipid dependent N-acylation of the N-terminal cysteine of apolipoprotein, the last step in lipoprotein maturation. This Pseudomonas aeruginosa (strain UCBPP-PA14) protein is Apolipoprotein N-acyltransferase.